A 261-amino-acid polypeptide reads, in one-letter code: UPF0246 protein Rmet_0978 (261 aa).

It belongs to the UPF0246 family.

The chain is UPF0246 protein Rmet_0978 from Cupriavidus metallidurans (strain ATCC 43123 / DSM 2839 / NBRC 102507 / CH34) (Ralstonia metallidurans).